The sequence spans 425 residues: Enolase (425 aa).

A (2R)-2-phosphoglycerate-binding site is contributed by Gln-163. Glu-205 acts as the Proton donor in catalysis. Residues Asp-242, Glu-285, and Asp-312 each coordinate Mg(2+). Residues Lys-337, Arg-366, Ser-367, and Lys-388 each contribute to the (2R)-2-phosphoglycerate site. Lys-337 serves as the catalytic Proton acceptor.

Belongs to the enolase family. Mg(2+) serves as cofactor.

The protein localises to the cytoplasm. It is found in the secreted. The protein resides in the cell surface. It carries out the reaction (2R)-2-phosphoglycerate = phosphoenolpyruvate + H2O. The protein operates within carbohydrate degradation; glycolysis; pyruvate from D-glyceraldehyde 3-phosphate: step 4/5. Functionally, catalyzes the reversible conversion of 2-phosphoglycerate (2-PG) into phosphoenolpyruvate (PEP). It is essential for the degradation of carbohydrates via glycolysis. The sequence is that of Enolase from Cereibacter sphaeroides (strain ATCC 17025 / ATH 2.4.3) (Rhodobacter sphaeroides).